A 293-amino-acid polypeptide reads, in one-letter code: Elongation factor Ts (293 aa).

The tract at residues 80–83 is involved in Mg(2+) ion dislocation from EF-Tu; it reads TDFV.

This sequence belongs to the EF-Ts family.

It is found in the cytoplasm. In terms of biological role, associates with the EF-Tu.GDP complex and induces the exchange of GDP to GTP. It remains bound to the aminoacyl-tRNA.EF-Tu.GTP complex up to the GTP hydrolysis stage on the ribosome. The polypeptide is Elongation factor Ts (Staphylococcus aureus (strain USA300)).